Consider the following 565-residue polypeptide: Thiol:disulfide interchange protein DsbD (565 aa).

A signal peptide spans 1–19 (MAQRIFTLILLLCSTSVFA). Cystine bridges form between cysteine 122/cysteine 128 and cysteine 182/cysteine 304. Transmembrane regions (helical) follow at residues 163-183 (LPFS…TPCV), 208-228 (LLTF…GLVV), 243-263 (YVLI…FGLF), 296-316 (IAGL…LLYI), 323-343 (WLGG…LMLI), 365-385 (FGFV…GDIW), and 386-406 (GLRL…ITSL). The region spanning 434–565 (WAFGATHTAQ…FSAHLRDRQP (132 aa)) is the Thioredoxin domain. The cysteines at positions 480 and 483 are disulfide-linked.

This sequence belongs to the thioredoxin family. DsbD subfamily.

The protein localises to the cell inner membrane. It carries out the reaction [protein]-dithiol + NAD(+) = [protein]-disulfide + NADH + H(+). The enzyme catalyses [protein]-dithiol + NADP(+) = [protein]-disulfide + NADPH + H(+). In terms of biological role, required to facilitate the formation of correct disulfide bonds in some periplasmic proteins and for the assembly of the periplasmic c-type cytochromes. Acts by transferring electrons from cytoplasmic thioredoxin to the periplasm. This transfer involves a cascade of disulfide bond formation and reduction steps. The chain is Thiol:disulfide interchange protein DsbD from Shigella dysenteriae serotype 1 (strain Sd197).